We begin with the raw amino-acid sequence, 496 residues long: Lysine--tRNA ligase (496 aa).

Glutamate 409 and glutamate 416 together coordinate Mg(2+).

The protein belongs to the class-II aminoacyl-tRNA synthetase family. As to quaternary structure, homodimer. Mg(2+) serves as cofactor.

The protein localises to the cytoplasm. The catalysed reaction is tRNA(Lys) + L-lysine + ATP = L-lysyl-tRNA(Lys) + AMP + diphosphate. The polypeptide is Lysine--tRNA ligase (Streptococcus pneumoniae serotype 4 (strain ATCC BAA-334 / TIGR4)).